We begin with the raw amino-acid sequence, 338 residues long: MIGMGIETSCDETSIGIVRDGKDLLSLKIFSQIDLHKPYGGIVPEIASRAHLEKINLLLEEAMEESEIQFKDLSYVAVTSSPGLTGSLMVGAQMARCIHMVYETPILPVCHLQSHFAVLHLEGVPTEFPVLGLLLSGGNSAIYILHEFGKMELLGDTMDDALGEAFDKVAGLLELPYPGGPHIEVRAKEYKPSPNEKPILPALLRNLPQEEVSFSFSGLKTAVMVLLEKQKELSKERICWNFQNSAFDLVERNLKRAVSKTGIKRIFAAGGVLANFTLQNRLYTWAEKNSVELFAPKKKIYCTDNGAMVASLGYYLFQKGYQRDIDFTVSPSRQEIFS.

The Fe cation site is built by histidine 111 and histidine 115. Substrate is bound by residues 134–138, aspartate 167, glycine 180, and asparagine 275; that span reads LLSGG. Position 304 (aspartate 304) interacts with Fe cation.

The protein belongs to the KAE1 / TsaD family. Fe(2+) is required as a cofactor.

It is found in the cytoplasm. The enzyme catalyses L-threonylcarbamoyladenylate + adenosine(37) in tRNA = N(6)-L-threonylcarbamoyladenosine(37) in tRNA + AMP + H(+). Required for the formation of a threonylcarbamoyl group on adenosine at position 37 (t(6)A37) in tRNAs that read codons beginning with adenine. Is involved in the transfer of the threonylcarbamoyl moiety of threonylcarbamoyl-AMP (TC-AMP) to the N6 group of A37, together with TsaE and TsaB. TsaD likely plays a direct catalytic role in this reaction. The sequence is that of tRNA N6-adenosine threonylcarbamoyltransferase from Leptospira interrogans serogroup Icterohaemorrhagiae serovar copenhageni (strain Fiocruz L1-130).